The primary structure comprises 313 residues: Ribosomal RNA small subunit methyltransferase H (313 aa).

Residues 35-37 (GGH), Asp-55, Phe-79, Asp-101, and Gln-108 each bind S-adenosyl-L-methionine. A disordered region spans residues 276–300 (QGGPTLKSVGKMMPPDDEVADNPRA).

It belongs to the methyltransferase superfamily. RsmH family.

It localises to the cytoplasm. The catalysed reaction is cytidine(1402) in 16S rRNA + S-adenosyl-L-methionine = N(4)-methylcytidine(1402) in 16S rRNA + S-adenosyl-L-homocysteine + H(+). Its function is as follows. Specifically methylates the N4 position of cytidine in position 1402 (C1402) of 16S rRNA. In Dickeya chrysanthemi (strain Ech1591) (Dickeya zeae (strain Ech1591)), this protein is Ribosomal RNA small subunit methyltransferase H.